A 68-amino-acid chain; its full sequence is Large ribosomal subunit protein bL35 (68 aa).

The protein belongs to the bacterial ribosomal protein bL35 family.

This is Large ribosomal subunit protein bL35 from Aster yellows witches'-broom phytoplasma (strain AYWB).